The primary structure comprises 106 residues: UPF0145 protein BDI_2732 (106 aa).

Belongs to the UPF0145 family.

The protein is UPF0145 protein BDI_2732 of Parabacteroides distasonis (strain ATCC 8503 / DSM 20701 / CIP 104284 / JCM 5825 / NCTC 11152).